A 298-amino-acid chain; its full sequence is MAKRIFLFILTNILVLTTIGIVLSVLSSVTGVGTYFTADGGIDPMALLVFSLVVGFVGSFTSLAISRWMAKTMMGVRVLNPKKHSLSYEEQQLVDRVHRLSRSAGLTKMPEVGIYRSPEVNAFATGPSKRRSLVAVSSGLLEQMDDAAVEGVLAHEVAHITNGDMVTMTLLQGIVNTFVVFLSRIAAWIASRFVKEDLAPIVHFIAMIIFQIVFSILGSLVVFAYSRHREFHADRGGADLAGKDKMIHALRTLKSYSSRILEDDQTAVQTLKINGKKRSSLFSTHPDLDERIRRLEAK.

The next 2 membrane-spanning stretches (helical) occupy residues 5 to 25 (IFLF…VLSV) and 45 to 65 (MALL…SLAI). His-155 serves as a coordination point for Zn(2+). Glu-156 is a catalytic residue. His-159 contacts Zn(2+). 2 helical membrane passes run 170–190 (LLQG…AWIA) and 204–224 (FIAM…VVFA). Residue Glu-230 coordinates Zn(2+).

This sequence belongs to the peptidase M48B family. The cofactor is Zn(2+).

It is found in the cell membrane. In Bacillus subtilis (strain 168), this protein is Protease HtpX homolog.